The primary structure comprises 325 residues: MLVISANEQRNLVNMNEVIEYAALALKEFSAERTITPIRDSLPFANEQNTALIMPSVAEGLEALGLKVVTVVPENKKIGKKTINGIVMLSDFQTGEPLALLEGSYLTMIRTGALSGVATKHLARHNAKTLCIIGTGEQAKGIAEAVFAVRDIEKVILYNRTEEKAYAFSQYIQEKFNKPAYVYTSANEAISEADIIATTTNASTPVFSKKLQKGVHVNAVGSFRPSMQELPSHAIANATKVVVESKEAALEETGDLQVPIQEGLFKSSDIHAELGQIISGEKAGRESDEEVTVFKSVGLAVVDIIVAKYLYERAVERGVGERIEF.

It belongs to the ornithine cyclodeaminase/mu-crystallin family.

The catalysed reaction is L-proline + NAD(+) = 1-pyrroline-2-carboxylate + NADH + H(+). The enzyme catalyses L-proline + NADP(+) = 1-pyrroline-2-carboxylate + NADPH + H(+). In terms of biological role, catalyzes the reduction of Delta(1)-pyrroline-2-carboxylate (Pyr2C) to L-proline, using preferentially NADPH over NADH as the electron donor. Is likely involved in a degradation pathway that converts trans-3-hydroxy-L-proline (t3LHyp) to L-proline. This Bacillus cereus (strain ATCC 10987 / NRS 248) protein is Delta(1)-pyrroline-2-carboxylate reductase.